Consider the following 362-residue polypeptide: Adenosine deaminase (362 aa).

Positions 41 and 43 each coordinate Zn(2+). 43–45 (HLD) contributes to the a purine D-ribonucleoside binding site. The interval 169–183 (IGETGISEESLRKAA) is gating helix loop; regulates binding affinity for substrates and thus substrate selectivity. Gly-200 contributes to the a purine D-ribonucleoside binding site. His-225 is a binding site for Zn(2+). Residues Glu-228, His-252, and Asp-309 each coordinate a purine D-ribonucleoside. Asp-309 contributes to the Zn(2+) binding site.

The protein belongs to the metallo-dependent hydrolases superfamily. Adenosine and AMP deaminases family. Zn(2+) serves as cofactor.

It carries out the reaction adenosine + H2O + H(+) = inosine + NH4(+). It functions in the pathway purine metabolism; purine nucleoside salvage. Inhibited by coformycin but not by methylthiocoformycin (MT-coformycin). Functionally, catalyzes the hydrolytic deamination of adenosine to produce inosine. Unlike other Plasmodium adenosine deaminases, does not catalyze the deamination of 5'-methylthioadenosine (MTA). Plays an essential role in the purine salvage pathway which allows the parasite to use host cell purines for the synthesis of nucleic acids. This chain is Adenosine deaminase, found in Plasmodium gallinaceum.